The primary structure comprises 483 residues: Acetyl-coenzyme A carboxylase carboxyl transferase subunit beta, chloroplastic (483 aa).

Positions leucine 221–proline 483 constitute a CoA carboxyltransferase N-terminal domain. 4 residues coordinate Zn(2+): cysteine 225, cysteine 228, cysteine 244, and cysteine 247. A C4-type zinc finger spans residues cysteine 225–cysteine 247.

The protein belongs to the AccD/PCCB family. Acetyl-CoA carboxylase is a heterohexamer composed of biotin carboxyl carrier protein, biotin carboxylase and 2 subunits each of ACCase subunit alpha and ACCase plastid-coded subunit beta (accD). Zn(2+) is required as a cofactor.

Its subcellular location is the plastid. It is found in the chloroplast stroma. The enzyme catalyses N(6)-carboxybiotinyl-L-lysyl-[protein] + acetyl-CoA = N(6)-biotinyl-L-lysyl-[protein] + malonyl-CoA. It participates in lipid metabolism; malonyl-CoA biosynthesis; malonyl-CoA from acetyl-CoA: step 1/1. Functionally, component of the acetyl coenzyme A carboxylase (ACC) complex. Biotin carboxylase (BC) catalyzes the carboxylation of biotin on its carrier protein (BCCP) and then the CO(2) group is transferred by the transcarboxylase to acetyl-CoA to form malonyl-CoA. The protein is Acetyl-coenzyme A carboxylase carboxyl transferase subunit beta, chloroplastic of Nuphar advena (Common spatterdock).